A 254-amino-acid chain; its full sequence is NAD-dependent protein deacetylase 1 (254 aa).

The Deacetylase sirtuin-type domain maps to Val3–Met252. Residues Ala29, Thr33, Phe40, Arg41, Gln105, Val107, Asp108, and His123 each contribute to the NAD(+) site. Nicotinamide is bound at residue Phe40. Nicotinamide-binding residues include Val107 and Asp108. The Proton acceptor role is filled by His123. Cys131, Cys134, Cys154, and Cys157 together coordinate Zn(2+). Residues Thr195, Ser196, and Asn220 each coordinate NAD(+).

This sequence belongs to the sirtuin family. Class U subfamily. The cofactor is Zn(2+).

The protein resides in the cytoplasm. It catalyses the reaction N(6)-acetyl-L-lysyl-[protein] + NAD(+) + H2O = 2''-O-acetyl-ADP-D-ribose + nicotinamide + L-lysyl-[protein]. NAD-dependent protein deacetylase which modulates the activities of several enzymes which are inactive in their acetylated form. Deacetylates the N-terminal lysine residue of Alba, the major archaeal chromatin protein and that, in turn, increases Alba's DNA binding affinity, thereby repressing transcription. The sequence is that of NAD-dependent protein deacetylase 1 from Pyrobaculum aerophilum (strain ATCC 51768 / DSM 7523 / JCM 9630 / CIP 104966 / NBRC 100827 / IM2).